Here is a 201-residue protein sequence, read N- to C-terminus: Recombination protein RecR (201 aa).

The C4-type zinc finger occupies 58–73; it reads CPECGLLTEEERCGLC. In terms of domain architecture, Toprim spans 81–176; it reads TLLCVVESSA…RTTRIAHGVP (96 aa).

This sequence belongs to the RecR family.

Its function is as follows. May play a role in DNA repair. It seems to be involved in an RecBC-independent recombinational process of DNA repair. It may act with RecF and RecO. This is Recombination protein RecR from Halorhodospira halophila (strain DSM 244 / SL1) (Ectothiorhodospira halophila (strain DSM 244 / SL1)).